The sequence spans 234 residues: Sugar fermentation stimulation protein A (234 aa).

Positions 201–220 (LLSEAQNKGVEVLAYKAELS) form a DNA-binding region, H-T-H motif.

The protein belongs to the SfsA family.

In terms of biological role, binds to DNA non-specifically. Could be a regulatory factor involved in maltose metabolism. The sequence is that of Sugar fermentation stimulation protein A from Salmonella choleraesuis (strain SC-B67).